The chain runs to 411 residues: Alpha-1-antitrypsin 1-6 (411 aa).

Positions Met-1–Thr-25 are cleaved as a signal peptide. 4 N-linked (GlcNAc...) asparagine glycosylation sites follow: Asn-50, Asn-89, Asn-101, and Asn-164.

It belongs to the serpin family. As to expression, expressed predominantly in epididymis where it is found in the epithelial cells of the caput, corpus and cauda epididymis.

It is found in the secreted. Its function is as follows. Inhibitor of serine proteases. This chain is Alpha-1-antitrypsin 1-6, found in Mus musculus (Mouse).